Reading from the N-terminus, the 279-residue chain is NADPH-dependent 7-cyano-7-deazaguanine reductase (279 aa).

86–88 (IES) lines the substrate pocket. 88-89 (SK) serves as a coordination point for NADPH. C187 acts as the Thioimide intermediate in catalysis. D194 serves as the catalytic Proton donor. Position 226 to 227 (226 to 227 (HE)) interacts with substrate. 255-256 (RG) serves as a coordination point for NADPH.

Belongs to the GTP cyclohydrolase I family. QueF type 2 subfamily. In terms of assembly, homodimer.

Its subcellular location is the cytoplasm. It catalyses the reaction 7-aminomethyl-7-carbaguanine + 2 NADP(+) = 7-cyano-7-deazaguanine + 2 NADPH + 3 H(+). It participates in tRNA modification; tRNA-queuosine biosynthesis. Catalyzes the NADPH-dependent reduction of 7-cyano-7-deazaguanine (preQ0) to 7-aminomethyl-7-deazaguanine (preQ1). This is NADPH-dependent 7-cyano-7-deazaguanine reductase from Haemophilus influenzae (strain PittGG).